We begin with the raw amino-acid sequence, 255 residues long: MALPDFTMRQLLEAGVHFGHQTHRWNPKMKPYIFGDRNNVHIIDLAQTVPMLSRALQVVSDTVASGGRVLFVGTKRQASEIIADAAKRSAQYYVNARWLGGMMTNWKTISNSIQRLRKLDEILASEASGFTKKERLNLEREREKLNRALGGIRDMGGTPDLMFIIDTNKESIAIEEAKRLGIPVVAVIDSNCDPDQIDYPIPGNDDASRAVALYCDLIARAAIDGIARQQGASGRDLGASEEVPVEPALEEASEA.

Residues 232-255 form a disordered region; it reads ASGRDLGASEEVPVEPALEEASEA.

The protein belongs to the universal ribosomal protein uS2 family.

In Sinorhizobium medicae (strain WSM419) (Ensifer medicae), this protein is Small ribosomal subunit protein uS2.